Here is a 73-residue protein sequence, read N- to C-terminus: UPF0154 protein LGAS_0795 (73 aa).

A helical membrane pass occupies residues 3–23; sequence LGLAIFLIIIALLIGLVGGFY.

The protein belongs to the UPF0154 family.

Its subcellular location is the cell membrane. The chain is UPF0154 protein LGAS_0795 from Lactobacillus gasseri (strain ATCC 33323 / DSM 20243 / BCRC 14619 / CIP 102991 / JCM 1131 / KCTC 3163 / NCIMB 11718 / NCTC 13722 / AM63).